A 286-amino-acid chain; its full sequence is Beta-lactamase SHV-46 (286 aa).

The N-terminal stretch at 1–21 (MRYIRLCIISLLATLPLAVHA) is a signal peptide. The Acyl-ester intermediate role is filled by serine 66. Cysteine 73 and cysteine 119 are oxidised to a cystine. Glutamate 164 functions as the Proton acceptor in the catalytic mechanism. Position 230–232 (230–232 (KTG)) interacts with substrate.

Belongs to the class-A beta-lactamase family.

It carries out the reaction a beta-lactam + H2O = a substituted beta-amino acid. The polypeptide is Beta-lactamase SHV-46 (bla) (Klebsiella oxytoca).